Here is a 187-residue protein sequence, read N- to C-terminus: Elongation factor P (187 aa).

This sequence belongs to the elongation factor P family.

The protein resides in the cytoplasm. The protein operates within protein biosynthesis; polypeptide chain elongation. Functionally, involved in peptide bond synthesis. Stimulates efficient translation and peptide-bond synthesis on native or reconstituted 70S ribosomes in vitro. Probably functions indirectly by altering the affinity of the ribosome for aminoacyl-tRNA, thus increasing their reactivity as acceptors for peptidyl transferase. The protein is Elongation factor P of Parafrankia sp. (strain EAN1pec).